The following is an 853-amino-acid chain: Leucine--tRNA ligase (853 aa).

The 'HIGH' region signature appears at 42 to 52 (PYPSGNLHMGH). The 'KMSKS' region signature appears at 615 to 619 (KMSKS). Lys-618 serves as a coordination point for ATP.

The protein belongs to the class-I aminoacyl-tRNA synthetase family.

The protein resides in the cytoplasm. It catalyses the reaction tRNA(Leu) + L-leucine + ATP = L-leucyl-tRNA(Leu) + AMP + diphosphate. This Crocosphaera subtropica (strain ATCC 51142 / BH68) (Cyanothece sp. (strain ATCC 51142)) protein is Leucine--tRNA ligase.